The chain runs to 1082 residues: Neisserial autotransporter lipoprotein NalP (1082 aa).

A signal peptide spans 1 to 27; the sequence is MRTTPTFPTKTFKPTAMALAVATTLSA. Cys-28 carries the N-palmitoyl cysteine lipid modification. Cys-28 carries the S-diacylglycerol cysteine lipid modification. The 373-residue stretch at 110–482 folds into the Peptidase S8 domain; sequence NDAYKNLINL…WGLLDAGKAM (373 aa). Catalysis depends on charge relay system residues Asp-138, His-210, and Ser-426. The Autotransporter domain occupies 808–1082; sequence DGLDHNGTGL…SGRVGVGYRF (275 aa).

The protein belongs to the peptidase S8 family. Probably auto-processes to yield a 68-70 kDa form and a C-terminal 30 kDa translocator domain; upon overexpression in situ and in E.coli full-length protein is seen as well as (probably) auto-processed forms of 68-70 kDa and 30 kDa in size, suggesting this may have protease activity.

The protein resides in the cell outer membrane. Its subcellular location is the cell surface. It is found in the secreted. It localises to the host cytoplasm. The protein localises to the host perinuclear region. Cleavage of host complement factor C3 is inhibited by PMSF. Functionally, major human immunogenic protein, detected in patients recovering from meningitidis. Autotransporter with a secreted protease domain involved in processing other autotransporter proteins including App, IgA, LbpB and NHBA. Probably autoprocesses to release the about 70 kDa passenger domain. Both cell surface protein (Neisserial autotransporter lipoprotein NalP) and the passenger domain cleave human (host) complement factor C3, generating a shorter alpha chain and a longer beta chain than normal. Uptake of a passenger domain fragment (residues 101-784) by human cells increases cell metabolic activity; the serine protease activity is required for this increase. Its function is as follows. Cleaves human (host) complement factor C3, generating a shorter alpha chain and a longer beta chain than normal. Does not act on mouse or rabbit C3. Cleavage causes C3b degradation by human CFI and CFH, and thus decreases deposition of C3b on the bacteria surface and probably facilitates complement escape. In terms of biological role, plays a role in extracellular-DNA (eDNA) mediated biofilm formation. In some strains (including cc32 strain MC58) eDNA stimulates biofilm formation. When NalP is not expressed (and no longer processes NHBA or IgA) biofilm formation increases. The chain is Neisserial autotransporter lipoprotein NalP from Neisseria meningitidis serogroup B (strain ATCC BAA-335 / MC58).